A 468-amino-acid polypeptide reads, in one-letter code: Protein phosphatase ppm-1.A (468 aa).

The interval 1 to 23 is disordered; sequence MTISRADLQIASSAEPKTHGNLN. The PPM-type phosphatase domain occupies 106–381; sequence RYGMSSMQGW…DNMTMVVVCF (276 aa). Positions 145, 146, 329, and 372 each coordinate Mn(2+).

It belongs to the PP2C family. Requires Mg(2+) as cofactor. The cofactor is Mn(2+). As to expression, expressed in neurons of the nerve ring and motor neurons of the ventral nerve cord.

The protein resides in the synapse. The catalysed reaction is O-phospho-L-seryl-[protein] + H2O = L-seryl-[protein] + phosphate. It catalyses the reaction O-phospho-L-threonyl-[protein] + H2O = L-threonyl-[protein] + phosphate. Its function is as follows. Probable phosphatase which regulates axon termination in ALM and PLM neurons, and synaptic branch extension and/or stabilization in PLM neurons. Plays a role in synapse formation in GABAergic DD motor neurons probably by dephosphorylating pmk-3 thereby negatively regulating a MAP kinase pathway that includes dlk-1, mkk-4 and pmk-3. The chain is Protein phosphatase ppm-1.A from Caenorhabditis elegans.